A 241-amino-acid polypeptide reads, in one-letter code: Anthocyanidin 3-O-glucosyltransferase 4 (241 aa).

UDP-alpha-D-glucose is bound by residues Gln-104, His-119, Trp-122, Asn-123, Ser-124, and Glu-127. Ala-142 provides a ligand contact to an anthocyanidin. Glu-143 and Gln-144 together coordinate UDP-alpha-D-glucose.

The protein belongs to the UDP-glycosyltransferase family. In terms of tissue distribution, faintly expressed in cotyledons, roots and leaves.

It carries out the reaction an anthocyanidin + UDP-alpha-D-glucose + H(+) = an anthocyanidin 3-O-beta-D-glucoside + UDP. The protein operates within pigment biosynthesis; anthocyanin biosynthesis. Its function is as follows. In the presence of other necessary color factors, this glycosylation reaction allows the accumulation of anthocyanin pigments. This is Anthocyanidin 3-O-glucosyltransferase 4 (GT4) from Manihot esculenta (Cassava).